The following is a 520-amino-acid chain: Ribonuclease Y (520 aa).

The helical transmembrane segment at 3–23 (IELAIIFIVLAAGAGFLIGNL) threads the bilayer. The KH domain occupies 210–273 (TVSVVALPSD…EVAKIALEKL (64 aa)). The region spanning 336–429 (VYQHSLEVAF…VQAADALSGA (94 aa)) is the HD domain.

This sequence belongs to the RNase Y family.

The protein resides in the cell membrane. Endoribonuclease that initiates mRNA decay. This is Ribonuclease Y from Geobacter sulfurreducens (strain ATCC 51573 / DSM 12127 / PCA).